A 193-amino-acid chain; its full sequence is uncharacterized protein (193 aa).

4 consecutive transmembrane segments (helical) span residues 8–28 (GVLVGGLWAWIAPPIHAVVAI), 46–66 (FFIAPFMLLGLLSVLAVVASA), 82–102 (GLSIGLTTAAAIAAGVGALVV), and 141–161 (IALTLMWPAGIASLVYALLAA).

To M.leprae ML1222.

The protein resides in the cell membrane. This is an uncharacterized protein from Mycobacterium tuberculosis (strain CDC 1551 / Oshkosh).